We begin with the raw amino-acid sequence, 375 residues long: Anhydro-N-acetylmuramic acid kinase (375 aa).

12 to 19 (GTSLDGVD) lines the ATP pocket.

It belongs to the anhydro-N-acetylmuramic acid kinase family.

The catalysed reaction is 1,6-anhydro-N-acetyl-beta-muramate + ATP + H2O = N-acetyl-D-muramate 6-phosphate + ADP + H(+). Its pathway is amino-sugar metabolism; 1,6-anhydro-N-acetylmuramate degradation. It participates in cell wall biogenesis; peptidoglycan recycling. Catalyzes the specific phosphorylation of 1,6-anhydro-N-acetylmuramic acid (anhMurNAc) with the simultaneous cleavage of the 1,6-anhydro ring, generating MurNAc-6-P. Is required for the utilization of anhMurNAc either imported from the medium or derived from its own cell wall murein, and thus plays a role in cell wall recycling. The polypeptide is Anhydro-N-acetylmuramic acid kinase (Variovorax paradoxus (strain S110)).